A 429-amino-acid polypeptide reads, in one-letter code: Serine hydroxymethyltransferase (429 aa).

(6S)-5,6,7,8-tetrahydrofolate-binding positions include Leu-128 and 132-134 (GHL). At Lys-237 the chain carries N6-(pyridoxal phosphate)lysine.

Belongs to the SHMT family. Homodimer. The cofactor is pyridoxal 5'-phosphate.

It localises to the cytoplasm. It catalyses the reaction (6R)-5,10-methylene-5,6,7,8-tetrahydrofolate + glycine + H2O = (6S)-5,6,7,8-tetrahydrofolate + L-serine. It participates in one-carbon metabolism; tetrahydrofolate interconversion. It functions in the pathway amino-acid biosynthesis; glycine biosynthesis; glycine from L-serine: step 1/1. In terms of biological role, catalyzes the reversible interconversion of serine and glycine with tetrahydrofolate (THF) serving as the one-carbon carrier. This reaction serves as the major source of one-carbon groups required for the biosynthesis of purines, thymidylate, methionine, and other important biomolecules. Also exhibits THF-independent aldolase activity toward beta-hydroxyamino acids, producing glycine and aldehydes, via a retro-aldol mechanism. This chain is Serine hydroxymethyltransferase, found in Caulobacter vibrioides (strain ATCC 19089 / CIP 103742 / CB 15) (Caulobacter crescentus).